The following is a 378-amino-acid chain: Glutamate 5-kinase (378 aa).

Lys20 lines the ATP pocket. Positions 60, 147, and 159 each coordinate substrate. Residues Thr179–Asp180 and Thr221–Lys227 contribute to the ATP site. The PUA domain maps to Arg286–Met364.

Belongs to the glutamate 5-kinase family.

The protein resides in the cytoplasm. It carries out the reaction L-glutamate + ATP = L-glutamyl 5-phosphate + ADP. It participates in amino-acid biosynthesis; L-proline biosynthesis; L-glutamate 5-semialdehyde from L-glutamate: step 1/2. Its function is as follows. Catalyzes the transfer of a phosphate group to glutamate to form L-glutamate 5-phosphate. This is Glutamate 5-kinase from Bordetella parapertussis (strain 12822 / ATCC BAA-587 / NCTC 13253).